The primary structure comprises 1146 residues: Elicitor of plant defense protein 1 (1146 aa).

2 disordered regions span residues 25-75 and 156-226; these read DPLP…RLSN and ARPP…PRQG. The span at 164-177 shows a compositional bias: basic and acidic residues; sequence RAERIKAEDSDQSG. One can recognise a uDENN domain in the interval 246–500; it reads PLNTDPNMHP…NLCTEAFSPL (255 aa). One can recognise a cDENN domain in the interval 522 to 656; the sequence is VNEIPGSRTI…HRRKLHALLQ (135 aa). The dDENN domain occupies 658 to 1016; it reads AAPAKLRYGV…ERETKPGTTA (359 aa). The disordered stretch occupies residues 730-806; sequence LHSKVDPNKP…RRSSSFGVDK (77 aa). Positions 732–743 are enriched in basic and acidic residues; sequence SKVDPNKPDRPG. Positions 744 to 760 are enriched in low complexity; the sequence is TSKSTRTSPPSSVSPVS. The segment covering 769 to 783 has biased composition (polar residues); that stretch reads TPVSRSDSGFALTST. Over residues 784–797 the composition is skewed to basic and acidic residues; it reads LREKRSRNFDEKTR. A Phorbol-ester/DAG-type zinc finger spans residues 883–931; sequence GHCFNWEEGALSSSCSVCDDRAEGDGIYKCSGCSAFAHGRCLGCVSLAC. The disordered stretch occupies residues 1121 to 1146; sequence PRPEQRGTRGLVRKQVPSMLGTSPTN.

This sequence belongs to the EPD1 elicitor family. As to quaternary structure, interacts with host cotton EIR5A (AC A0A5J5T2N2) and EIR5D (AC A0A5J5NT52) and host N.benthamiana EIR (AC P0DXJ0).

It is found in the secreted. The protein resides in the host cell. Its function is as follows. Acts as an elicitor that triggers defense responses in both Nicotiana benthamiana and cotton plants. Triggers the accumulation of reactive oxygen species (ROS) and the activation of cell death in cotton plants. Induces significantly enhanced resistance of Nicotiana benthamiana to both the broad-host-range filamentous pathogen Botrytis cinerea and the semibiotrophic pathogen Phytophthora capsici. Stimulates the expression of EIR5A (AC A0A5J5T2N2) and EIR5D (AC A0A5J5NT52) in cotton plants and recognition of EPD1 potentiates EIRs to enhance cotton PAMP-triggered immunity (PTI). This chain is Elicitor of plant defense protein 1, found in Verticillium dahliae (strain VdLs.17 / ATCC MYA-4575 / FGSC 10137) (Verticillium wilt).